The sequence spans 773 residues: Lon protease homolog 2, peroxisomal (773 aa).

Residues 9 to 198 (LPVIVVDSGV…MCEKWMQMQR (190 aa)) enclose the Lon N-terminal domain. 336–343 (GPPGIGKT) contributes to the ATP binding site. The Lon proteolytic domain occupies 587-766 (PLPPGVCFGL…EDVIEAMMEK (180 aa)). Active-site residues include S672 and K715. Positions 771–773 (AKL) match the Microbody targeting signal motif.

Belongs to the peptidase S16 family.

It is found in the peroxisome matrix. It carries out the reaction Hydrolysis of proteins in presence of ATP.. In terms of biological role, ATP-dependent serine protease that mediates the selective degradation of misfolded and unassembled polypeptides in the peroxisomal matrix. Necessary for type 2 peroxisome targeting signal (PTS2)-containing protein processing and facilitates peroxisome matrix protein import. This Caenorhabditis briggsae protein is Lon protease homolog 2, peroxisomal.